Here is a 246-residue protein sequence, read N- to C-terminus: DNA repair protein RecO (246 aa).

The protein belongs to the RecO family.

Involved in DNA repair and RecF pathway recombination. The protein is DNA repair protein RecO of Cutibacterium acnes (strain DSM 16379 / KPA171202) (Propionibacterium acnes).